The sequence spans 1023 residues: MCVYKTYKGKLKITSIPARADRPRLPFPLNFLIHKRKLYLIDTIAEVQRCADCGSYFKQTHTCSTRRRDFYFHHINTQSSDWWEEIKFFPLGAHPDTRRLFVVYDVETYTWHGSFGKQLMPFMLVFTLFGDAQLCEQAVNIAKKQKWSSWPKQANTFYYLNPQRNKVGSLFKQYRDALQEAASTLLWRQFLADNPCLENLCLKLGYVHASDIPFEELCTLELKGQPTFLEVYVVGHNINGFDEIVLAAQVINNKQGIPAAFKVSRNFMPRCGKILFNDLTFALPNPTHAARKDFKDWEEGTPTSADYKFQFVKFMVRDTFALTHTSLRNAAAAYALPVEKGCCPYKAVNEFYMLGTYRTDADSFPQRDYWSSDEEYLLNKSLWLQENSGAYDIVQRTLDYCAMDVLVTAELVKKLQASYLDFVHTSVGLPHCNFNVLQRPTISSNSHAIFRQVVYRSQRPNRSSLGNFLLAPSNEMYDYVRESIRGGRCYPTYIGVLTEAIYVYDICGMYASALTHPFPAGKPLNPFDRALAIKNWQDRLTQLHRPIDYFDRTLLPAIFTIDADPPPEAFLDVIPPFCSRKGGRLCWTNETLRGEVVTCLDAITLHNRGWRVQILNDPRTTVFPQWECLARDYVQLNIAAKERADKEKNQTLRSIAKLLSNALYGSFATKLDNRVTVFSDQMEDKYVRGISDGTYDIKSTAFVETDNLSSSVMAELKITYSPVKQQTDATRKHRQCTPTSNSSSDEDAPFYTLGDPQNHHVTYTYKPITFLEADDSALCLHTLQKKSSLIFNNRYPSHIASFVLAWTRAFVSEWADILYLEDRGTPLEDRILKFVYGDTDSMFLTQRGKELMDTRGKHRLKGNNRPLVFDPTNPQLTWLVECETQCPRCHGDAHSQESVFLAPKLYALKNIYCPSCRAESSGKLRAKGHATSQLSYDLLVTCYYSTEQLGDEKFGTSRLSLRRSLVSRQTHQQPFTVTETTLARTLRPWKDRTLRAIDRHRLAPYSNSHPNPRNKELCWMEMY.

The segment at 726-751 (QTDATRKHRQCTPTSNSSSDEDAPFY) is disordered.

This sequence belongs to the DNA polymerase type-B family. Heterodimer with the terminal protein; this heterodimer binds to bp 9 to 18 of the genome. Forms a complex with viral pTP, DBP and hosts NFIA and POU2F1/OCT1 for initiation of replication.

Its subcellular location is the host nucleus. It carries out the reaction DNA(n) + a 2'-deoxyribonucleoside 5'-triphosphate = DNA(n+1) + diphosphate. Its function is as follows. Eukaryotic-type DNA polymerase involved in viral genomic replication. DNA synthesis is protein primed, and acts in a strand displacement replication. Assembles in complex with viral pTP, DBP, host NFIA and host POU2F1/OCT1 on viral origin of replication. The polymerase covalently transfers dCMP onto pTP, thereby initiating complementary strand synthesis. The protein is DNA polymerase of Bovine adenovirus B serotype 3 (BAdV-3).